A 305-amino-acid polypeptide reads, in one-letter code: Putative ankyrin repeat protein RF_0580 (305 aa).

7 ANK repeats span residues 5–34, 39–68, 72–101, 107–136, 140–169, 173–202, and 206–235; these read YNKN…NIDE, RGET…SPNI, SGQT…NIDL, CGHS…DINS, FGAS…DVNA, YEDT…DVNI, and NNFT…TIKI.

In Rickettsia felis (strain ATCC VR-1525 / URRWXCal2) (Rickettsia azadi), this protein is Putative ankyrin repeat protein RF_0580.